We begin with the raw amino-acid sequence, 154 residues long: Protein SprT-like (154 aa).

Residues 6–144 (LQQLTETISL…CGTCHGKLKF (139 aa)) enclose the SprT-like domain. Position 67 (His67) interacts with Zn(2+). The active site involves Glu68. His71 is a binding site for Zn(2+).

The protein belongs to the SprT family. Requires Zn(2+) as cofactor.

Its subcellular location is the cytoplasm. This chain is Protein SprT-like, found in Shouchella clausii (strain KSM-K16) (Alkalihalobacillus clausii).